A 482-amino-acid chain; its full sequence is Putative transposase R186 (482 aa).

Cysteine 416, cysteine 419, cysteine 433, and cysteine 435 together coordinate Zn(2+).

The protein in the central section; belongs to the transposase 2 family. This sequence in the C-terminal section; belongs to the transposase 35 family.

This is Putative transposase R186 from Acanthamoeba polyphaga (Amoeba).